A 239-amino-acid chain; its full sequence is tRNA (guanine-N(7)-)-methyltransferase (239 aa).

Glu69, Glu94, Asp121, and Asp144 together coordinate S-adenosyl-L-methionine. Asp144 is an active-site residue. Lys148 contacts substrate. Positions Arg150–Arg155 are interaction with RNA. Residues Asp180 and Thr217–Glu220 contribute to the substrate site.

It belongs to the class I-like SAM-binding methyltransferase superfamily. TrmB family. In terms of assembly, monomer.

The catalysed reaction is guanosine(46) in tRNA + S-adenosyl-L-methionine = N(7)-methylguanosine(46) in tRNA + S-adenosyl-L-homocysteine. It participates in tRNA modification; N(7)-methylguanine-tRNA biosynthesis. In terms of biological role, catalyzes the formation of N(7)-methylguanine at position 46 (m7G46) in tRNA. The polypeptide is tRNA (guanine-N(7)-)-methyltransferase (Serratia proteamaculans (strain 568)).